Consider the following 126-residue polypeptide: Large ribosomal subunit protein eL8 (126 aa).

The protein belongs to the eukaryotic ribosomal protein eL8 family. In terms of assembly, part of the 50S ribosomal subunit. Probably part of the RNase P complex.

Its subcellular location is the cytoplasm. Its function is as follows. Multifunctional RNA-binding protein that recognizes the K-turn motif in ribosomal RNA, the RNA component of RNase P, box H/ACA, box C/D and box C'/D' sRNAs. The polypeptide is Large ribosomal subunit protein eL8 (Cenarchaeum symbiosum (strain A)).